The sequence spans 118 residues: Large ribosomal subunit protein uL18 (118 aa).

It belongs to the universal ribosomal protein uL18 family. As to quaternary structure, part of the 50S ribosomal subunit; part of the 5S rRNA/L5/L18/L25 subcomplex. Contacts the 5S and 23S rRNAs.

Functionally, this is one of the proteins that bind and probably mediate the attachment of the 5S RNA into the large ribosomal subunit, where it forms part of the central protuberance. The chain is Large ribosomal subunit protein uL18 from Rickettsia conorii (strain ATCC VR-613 / Malish 7).